A 68-amino-acid chain; its full sequence is MSDPARKSFTEQGKEKMTPDSSKSTLDKAKESITGAYDKVASAFTSDEDKSTSQEAHDKAQRFVDDKL.

Composition is skewed to basic and acidic residues over residues 1–18 and 47–68; these read MSDPARKSFTEQGKEKMT and DEDKSTSQEAHDKAQRFVDDKL. Disordered stretches follow at residues 1–32 and 44–68; these read MSDPARKSFTEQGKEKMTPDSSKSTLDKAKES and FTSDEDKSTSQEAHDKAQRFVDDKL.

To yeast HSP12/GLP1 and C.albicans WH11.

The polypeptide is Heat shock protein hsp9 (hsp9) (Schizosaccharomyces pombe (strain 972 / ATCC 24843) (Fission yeast)).